A 275-amino-acid polypeptide reads, in one-letter code: Undecaprenyl-diphosphatase (275 aa).

8 helical membrane-spanning segments follow: residues 4 to 24, 54 to 74, 92 to 112, 123 to 143, 154 to 174, 194 to 214, 228 to 248, and 255 to 275; these read IYGL…EFLP, LGSI…LFGL, LHLY…LMFY, YVMY…LIHD, ISYL…LPGF, AFEF…ILDL, MFII…KLFW, and SFIP…LILI.

Belongs to the UppP family.

The protein resides in the cell membrane. The enzyme catalyses di-trans,octa-cis-undecaprenyl diphosphate + H2O = di-trans,octa-cis-undecaprenyl phosphate + phosphate + H(+). In terms of biological role, catalyzes the dephosphorylation of undecaprenyl diphosphate (UPP). Confers resistance to bacitracin. This chain is Undecaprenyl-diphosphatase, found in Baumannia cicadellinicola subsp. Homalodisca coagulata.